A 67-amino-acid polypeptide reads, in one-letter code: Ferredoxin (67 aa).

2 4Fe-4S ferredoxin-type domains span residues 3–31 (WKVSVDQDTCIGDAICASLCPDVFEMNDE) and 36–67 (PKVEVIEDEELYNCAKEAMEACPVSAITIEEA). Residues Cys12, Asp15, and Cys18 each contribute to the [4Fe-4S] cluster site. Residues Cys22 and Cys49 are joined by a disulfide bond. Cys57 contributes to the [4Fe-4S] cluster binding site.

As to quaternary structure, homodimer. Requires [4Fe-4S] cluster as cofactor. The cofactor is [3Fe-4S] cluster.

Ferredoxins are iron-sulfur proteins that transfer electrons in a wide variety of metabolic reactions. The sequence is that of Ferredoxin (fdxA) from Pyrococcus furiosus (strain ATCC 43587 / DSM 3638 / JCM 8422 / Vc1).